Reading from the N-terminus, the 129-residue chain is Dormancy-associated protein 2 (129 aa).

An N-terminal signal peptide occupies residues 1 to 25 (MDSRKAMLILGLLAMVLLISSEVSA). The interval 110–129 (GGYHGGGGHGGHGGASNNGN) is disordered.

Belongs to the DRM1/ARP family. As to expression, expressed in axilary buds. Detected in growing stems, leaflets and floral organs, but not in roots.

The chain is Dormancy-associated protein 2 from Pisum sativum (Garden pea).